The primary structure comprises 321 residues: o-succinylbenzoate synthase (321 aa).

Catalysis depends on Lys134, which acts as the Proton donor. Mg(2+) contacts are provided by Asp162, Glu191, and Asp214. The Proton acceptor role is filled by Lys236.

The protein belongs to the mandelate racemase/muconate lactonizing enzyme family. MenC type 1 subfamily. Requires a divalent metal cation as cofactor.

The enzyme catalyses (1R,6R)-6-hydroxy-2-succinyl-cyclohexa-2,4-diene-1-carboxylate = 2-succinylbenzoate + H2O. The protein operates within quinol/quinone metabolism; 1,4-dihydroxy-2-naphthoate biosynthesis; 1,4-dihydroxy-2-naphthoate from chorismate: step 4/7. Its pathway is quinol/quinone metabolism; menaquinone biosynthesis. In terms of biological role, converts 2-succinyl-6-hydroxy-2,4-cyclohexadiene-1-carboxylate (SHCHC) to 2-succinylbenzoate (OSB). The protein is o-succinylbenzoate synthase of Enterobacter sp. (strain 638).